The primary structure comprises 159 residues: RNA pyrophosphohydrolase (159 aa).

The Nudix hydrolase domain maps to 6 to 149; that stretch reads GFRPNVGIIL…KREVYRRALK (144 aa). Residues 38–59 carry the Nudix box motif; it reads GGINPQETPEDALYRELNEEVG.

Belongs to the Nudix hydrolase family. RppH subfamily. It depends on a divalent metal cation as a cofactor.

Its function is as follows. Accelerates the degradation of transcripts by removing pyrophosphate from the 5'-end of triphosphorylated RNA, leading to a more labile monophosphorylated state that can stimulate subsequent ribonuclease cleavage. The sequence is that of RNA pyrophosphohydrolase from Pseudomonas savastanoi pv. phaseolicola (strain 1448A / Race 6) (Pseudomonas syringae pv. phaseolicola (strain 1448A / Race 6)).